The primary structure comprises 464 residues: ATP-dependent protease ATPase subunit HslU (464 aa).

Residues I19, 61–66 (GVGKTE), D277, E342, and R414 contribute to the ATP site.

It belongs to the ClpX chaperone family. HslU subfamily. As to quaternary structure, a double ring-shaped homohexamer of HslV is capped on each side by a ring-shaped HslU homohexamer. The assembly of the HslU/HslV complex is dependent on binding of ATP.

The protein resides in the cytoplasm. ATPase subunit of a proteasome-like degradation complex; this subunit has chaperone activity. The binding of ATP and its subsequent hydrolysis by HslU are essential for unfolding of protein substrates subsequently hydrolyzed by HslV. HslU recognizes the N-terminal part of its protein substrates and unfolds these before they are guided to HslV for hydrolysis. The polypeptide is ATP-dependent protease ATPase subunit HslU (Lactobacillus gasseri (strain ATCC 33323 / DSM 20243 / BCRC 14619 / CIP 102991 / JCM 1131 / KCTC 3163 / NCIMB 11718 / NCTC 13722 / AM63)).